A 314-amino-acid polypeptide reads, in one-letter code: Methionyl-tRNA formyltransferase (314 aa).

112–115 (SLLP) lines the (6S)-5,6,7,8-tetrahydrofolate pocket.

This sequence belongs to the Fmt family.

The catalysed reaction is L-methionyl-tRNA(fMet) + (6R)-10-formyltetrahydrofolate = N-formyl-L-methionyl-tRNA(fMet) + (6S)-5,6,7,8-tetrahydrofolate + H(+). Functionally, attaches a formyl group to the free amino group of methionyl-tRNA(fMet). The formyl group appears to play a dual role in the initiator identity of N-formylmethionyl-tRNA by promoting its recognition by IF2 and preventing the misappropriation of this tRNA by the elongation apparatus. This chain is Methionyl-tRNA formyltransferase, found in Buchnera aphidicola subsp. Acyrthosiphon pisum (strain 5A).